The sequence spans 355 residues: Guanine nucleotide-binding protein subunit beta-5a (355 aa).

A disordered region spans residues 1–23; it reads MAAQEEPAQPGDSLATLKSESDT. 7 WD repeats span residues 63-102, 105-144, 153-194, 195-238, 239-278, 280-322, and 325-355; these read GHGN…KEHA, MPCT…NENL, MHTN…QSFH, GHAA…QSFE, SHDS…EVAI, SKES…RVSI, and GHEN…RIWA.

The protein belongs to the WD repeat G protein beta family. As to quaternary structure, may interact with RGS9; this interaction stabilizes both proteins and increases RGS9 GTPase-activating protein (GAP) activity, hence accelerating the deactivation of D(2) dopamine receptor-mediated signaling.

It is found in the membrane. Its function is as follows. Enhances GTPase-activating protein (GAP) activity of regulator of G protein signaling (RGS) proteins, such as RGS7 and RGS9, hence involved in the termination of the signaling initiated by the G protein coupled receptors (GPCRs) by accelerating the GTP hydrolysis on the G-alpha subunits, thereby promoting their inactivation. Increases RGS7 GTPase-activating protein (GAP) activity, thereby regulating mood and cognition. Increases RGS9 GTPase-activating protein (GAP) activity, hence contributes to the deactivation of G protein signaling initiated by D(2) dopamine receptors. Along with gnb5b, plays an important role in neuronal signaling, including in the parasympathetic, but not sympathetic, control of heart rate. The polypeptide is Guanine nucleotide-binding protein subunit beta-5a (Danio rerio (Zebrafish)).